We begin with the raw amino-acid sequence, 511 residues long: Bifunctional purine biosynthesis protein PurH (511 aa).

The MGS-like domain occupies Met-1–Thr-146.

The protein belongs to the PurH family.

It catalyses the reaction (6R)-10-formyltetrahydrofolate + 5-amino-1-(5-phospho-beta-D-ribosyl)imidazole-4-carboxamide = 5-formamido-1-(5-phospho-D-ribosyl)imidazole-4-carboxamide + (6S)-5,6,7,8-tetrahydrofolate. The enzyme catalyses IMP + H2O = 5-formamido-1-(5-phospho-D-ribosyl)imidazole-4-carboxamide. Its pathway is purine metabolism; IMP biosynthesis via de novo pathway; 5-formamido-1-(5-phospho-D-ribosyl)imidazole-4-carboxamide from 5-amino-1-(5-phospho-D-ribosyl)imidazole-4-carboxamide (10-formyl THF route): step 1/1. The protein operates within purine metabolism; IMP biosynthesis via de novo pathway; IMP from 5-formamido-1-(5-phospho-D-ribosyl)imidazole-4-carboxamide: step 1/1. In Synechocystis sp. (strain ATCC 27184 / PCC 6803 / Kazusa), this protein is Bifunctional purine biosynthesis protein PurH.